Here is a 240-residue protein sequence, read N- to C-terminus: MIYNFIDSLIEGKFQKRLNRFVCNVEVNGESRLCHVPNSGRMKELLLPETPVLLQKKQGKQRKTDFDLALVLYEGHWVSVDSRLPNKLFEILVKKSLLPETSVAYGAEFLRREPSYGRGRFDMELMSTNSDRILIELKSVTLVQNNLALFPDAPTDRGRRHLEELTDSLREGYQPAVIFLVQRDDALCFAPNWEMDEAFSKALVQAQEQGVAVESYAFKVTPEGLNYCQRLPVTTQREVE.

This sequence belongs to the SfsA family.

The protein is Sugar fermentation stimulation protein homolog of Natranaerobius thermophilus (strain ATCC BAA-1301 / DSM 18059 / JW/NM-WN-LF).